A 644-amino-acid chain; its full sequence is MRTRLNFLLLCIASVLSVIWIGVLLTWNDNNLGGISLNGGKDSAYDDLLSLGSFNDMEVDSYVTNIYDNAPVLGCTDLSYHGLLKVTPKHDLACDLEFIRAQILDIDVYSAIKDLEDKALTVKQKVEKHWFTFYGSSVFLPEHDVHYLVRRVIFSAEGKANSPVTSIIVAQIYDKNWNELNGHFLDILNPNTGKVQHNTFPQVLPIATNFVKGKKFRGAEDPRVVLRKGRFGPDPLVMFNSLTQDNKRRRIFTISPFDQFKTVMYDIKDYEMPRYEKNWVPFFLKDNQEAVHFVYSFNPLRVLKCSLDDGSCDIVFEIPKVDSMSSELRGATPMINLPQAIPMAKDKEIWVSFPRTRIANCGCSRTTYRPMLMLFVREGSNFFVELLSTSLDFGLEVLPYSGNGLPCSADHSVLIPNSIDNWEVVDSNGDDILTLSFSEADKSTSVIHIRGLYNYLSELDGYQGPEAEDEHNFQRILSDLHFDNKTTVNNFIKVQSCALDAAKGYCKEYGLTRGEAERRRRVAEERKKKEKEEEEKKKKKEKEEEEKKRIEEEKKKIEEKERKEKEKEEAERKKLQEMKKKLEEITEKLEKGQRNKEIDPKEKQREEEERKERVRKIAEKQRKEAEKKEAEKKANDKKDLKIRQ.

At 1 to 6 (MRTRLN) the chain is on the cytoplasmic side. Residues 7–27 (FLLLCIASVLSVIWIGVLLTW) form a helical membrane-spanning segment. At 28–644 (NDNNLGGISL…NDKKDLKIRQ (617 aa)) the chain is on the extracellular side. An N-linked (GlcNAc...) asparagine glycan is attached at Asn484. The stretch at 512–644 (TRGEAERRRR…NDKKDLKIRQ (133 aa)) forms a coiled coil. The interval 517–644 (ERRRRVAEER…NDKKDLKIRQ (128 aa)) is disordered.

The protein belongs to the BMT family.

The protein resides in the membrane. Its function is as follows. Beta-mannosyltransferase involved in cell wall biosynthesis. Initiates the beta-mannosylation of core N-linked glycans. The chain is Beta-mannosyltransferase 2 (BMT2) from Komagataella phaffii (strain GS115 / ATCC 20864) (Yeast).